The following is a 596-amino-acid chain: Dihydroxy-acid dehydratase pbrD, mitochondrial (596 aa).

The N-terminal 18 residues, 1 to 18, are a transit peptide targeting the mitochondrion; it reads MATSSIRSRALGLSRRAR. Cysteine 84 serves as a coordination point for [2Fe-2S] cluster. Aspartate 116 contributes to the Mg(2+) binding site. [2Fe-2S] cluster is bound at residue cysteine 157. Aspartate 158 is a binding site for Mg(2+). [2Fe-2S] cluster is bound at residue cysteine 230. Glutamate 483 lines the Mg(2+) pocket. Serine 509 acts as the Proton acceptor in catalysis.

It belongs to the IlvD/Edd family. Requires [2Fe-2S] cluster as cofactor. It depends on Mg(2+) as a cofactor.

The protein localises to the mitochondrion. The enzyme catalyses (2R)-2,3-dihydroxy-3-methylbutanoate = 3-methyl-2-oxobutanoate + H2O. It carries out the reaction (2R,3R)-2,3-dihydroxy-3-methylpentanoate = (S)-3-methyl-2-oxopentanoate + H2O. It functions in the pathway amino-acid biosynthesis; L-isoleucine biosynthesis; L-isoleucine from 2-oxobutanoate: step 3/4. The protein operates within amino-acid biosynthesis; L-valine biosynthesis; L-valine from pyruvate: step 3/4. Its activity is regulated as follows. DHAD activity is not inhibited by the dihydroxyacid dehydratase inhibitor aspterric acid (AA). Its function is as follows. Dihydroxyacid dehydratase; part of the gene cluster that mediates the biosynthesis of the sesquiterpenoid aspterric acid (AA), an inhibitor of dihydroxy-acid dehydratase (DHAD) effective as an herbicide. Performs the third step in the common pathway leading to biosynthesis of branched-chain amino acids. Catalyzes the dehydration of (2R,3R)-2,3-dihydroxy-3-methylpentanoate (2,3-dihydroxy-3-methylvalerate) into 2-oxo-3-methylpentanoate (2-oxo-3-methylvalerate) and of (2R)-2,3-dihydroxy-3-methylbutanoate (2,3-dihydroxyisovalerate) into 2-oxo-3-methylbutanoate (2-oxoisovalerate), the penultimate precursor to L-isoleucine and L-valine, respectively. PbrD confers self-resistance in the presence of the dihydroxyacid dehydratase inhibitor aspterric acid (AA) produced by the ast cluster. The polypeptide is Dihydroxy-acid dehydratase pbrD, mitochondrial (Penicillium brasilianum).